The sequence spans 749 residues: Cytosolic phospholipase A2 (749 aa).

One can recognise a C2 domain in the interval 1–124; that stretch reads MASIDPYQHI…GEKKQVPFTF (124 aa). Positions 1-178 are phospholipid binding; sequence MASIDPYQHI…LRKLLGPEKT (178 aa). The Ca(2+) site is built by Asp-40, Thr-41, Asp-43, Asn-65, Asp-93, Ala-94, and Asn-95. The region spanning 138–740 is the PLA2c domain; the sequence is VCSSTDLRFS…NDVESRKLHH (603 aa). The active-site Nucleophile is the Ser-229. The interval 428-452 is disordered; the sequence is HILGNDSSDSDDEMQEPKGTENAKA. The span at 442 to 452 shows a compositional bias: basic and acidic residues; sequence QEPKGTENAKA. Catalysis depends on Asp-549, which acts as the Proton acceptor. The interval 729 to 749 is disordered; it reads SLNDVESRKLHHKDSQSKFQM. Over residues 733 to 749 the composition is skewed to basic and acidic residues; the sequence is VESRKLHHKDSQSKFQM.

The protein resides in the cytoplasm. It is found in the cytoplasmic vesicle. It carries out the reaction a 1,2-diacyl-sn-glycero-3-phosphocholine + H2O = a 1-acyl-sn-glycero-3-phosphocholine + a fatty acid + H(+). The enzyme catalyses a 1-acyl-sn-glycero-3-phosphocholine + H2O = sn-glycerol 3-phosphocholine + a fatty acid + H(+). With respect to regulation, stimulated by agonists such as ATP, EGF, thrombin and bradykinin as well as by cytosolic Ca(2+). Its function is as follows. Selectively hydrolyzes arachidonyl phospholipids in the sn-2 position releasing arachidonic acid. Together with its lysophospholipid activity, it is implicated in the initiation of the inflammatory response. The sequence is that of Cytosolic phospholipase A2 (pla2g4a) from Xenopus laevis (African clawed frog).